We begin with the raw amino-acid sequence, 334 residues long: Aspartate carbamoyltransferase catalytic subunit (334 aa).

2 residues coordinate carbamoyl phosphate: arginine 70 and threonine 71. Residue lysine 98 coordinates L-aspartate. The carbamoyl phosphate site is built by arginine 120, histidine 150, and glutamine 153. 2 residues coordinate L-aspartate: arginine 183 and arginine 239. The carbamoyl phosphate site is built by glycine 280 and proline 281.

Belongs to the aspartate/ornithine carbamoyltransferase superfamily. ATCase family. As to quaternary structure, heterododecamer (2C3:3R2) of six catalytic PyrB chains organized as two trimers (C3), and six regulatory PyrI chains organized as three dimers (R2).

It carries out the reaction carbamoyl phosphate + L-aspartate = N-carbamoyl-L-aspartate + phosphate + H(+). The protein operates within pyrimidine metabolism; UMP biosynthesis via de novo pathway; (S)-dihydroorotate from bicarbonate: step 2/3. Its function is as follows. Catalyzes the condensation of carbamoyl phosphate and aspartate to form carbamoyl aspartate and inorganic phosphate, the committed step in the de novo pyrimidine nucleotide biosynthesis pathway. The polypeptide is Aspartate carbamoyltransferase catalytic subunit (Pseudomonas paraeruginosa (strain DSM 24068 / PA7) (Pseudomonas aeruginosa (strain PA7))).